The sequence spans 863 residues: DNA ligase (863 aa).

Residues 76-80 (DAAYD), 125-126 (SL), and Glu-159 each bind NAD(+). Residue Lys-161 is the N6-AMP-lysine intermediate of the active site. Positions 182 and 221 each coordinate NAD(+). The tract at residues 237-256 (EDAGRPPFANPRNAAAGSLR) is disordered. The span at 241–253 (RPPFANPRNAAAG) shows a compositional bias: low complexity. Residues Lys-346 and Lys-370 each contribute to the NAD(+) site. Positions 467, 470, 486, and 492 each coordinate Zn(2+). The 83-residue stretch at 781–863 (GLPQTLEGKS…DTLLATGDVQ (83 aa)) folds into the BRCT domain.

Belongs to the NAD-dependent DNA ligase family. LigA subfamily. The cofactor is Mg(2+). Requires Mn(2+) as cofactor.

The enzyme catalyses NAD(+) + (deoxyribonucleotide)n-3'-hydroxyl + 5'-phospho-(deoxyribonucleotide)m = (deoxyribonucleotide)n+m + AMP + beta-nicotinamide D-nucleotide.. Its function is as follows. DNA ligase that catalyzes the formation of phosphodiester linkages between 5'-phosphoryl and 3'-hydroxyl groups in double-stranded DNA using NAD as a coenzyme and as the energy source for the reaction. It is essential for DNA replication and repair of damaged DNA. In Bifidobacterium animalis subsp. lactis (strain AD011), this protein is DNA ligase.